The primary structure comprises 259 residues: Type III pantothenate kinase (259 aa).

6 to 13 (DVGNTNCT) is an ATP binding site. 107–110 (GSDR) contacts substrate. The active-site Proton acceptor is the D109. Residue D129 coordinates K(+). ATP is bound at residue T132. Residue T184 participates in substrate binding.

Belongs to the type III pantothenate kinase family. Homodimer. NH4(+) is required as a cofactor. Requires K(+) as cofactor.

The protein localises to the cytoplasm. The enzyme catalyses (R)-pantothenate + ATP = (R)-4'-phosphopantothenate + ADP + H(+). Its pathway is cofactor biosynthesis; coenzyme A biosynthesis; CoA from (R)-pantothenate: step 1/5. In terms of biological role, catalyzes the phosphorylation of pantothenate (Pan), the first step in CoA biosynthesis. In Listeria welshimeri serovar 6b (strain ATCC 35897 / DSM 20650 / CCUG 15529 / CIP 8149 / NCTC 11857 / SLCC 5334 / V8), this protein is Type III pantothenate kinase.